The following is a 358-amino-acid chain: Protein ocs (358 aa).

This sequence belongs to the lysopine/nopaline/octopine/opine/vitopine dehydrogenases family. Monomer.

The catalysed reaction is D-octopine + NAD(+) + H2O = L-arginine + pyruvate + NADH + H(+). It carries out the reaction D-lysopine + NADP(+) + H2O = L-lysine + pyruvate + NADPH + H(+). Functionally, reductive condensation of pyruvate and arginine, lysine, histidine, or octopine to form octopine, lysopine, histopine, or octopinic acid, respectively. NADPH is the preferred cofactor, but NADH can also be used. This is Protein ocs (ocs) from Agrobacterium tumefaciens (strain Ach5).